Consider the following 459-residue polypeptide: Zinc finger and BTB domain-containing protein 9 (459 aa).

Residues 48–112 enclose the BTB domain; it reads CDVSLLVQGR…IYSGSLHLPL (65 aa). A compositionally biased stretch (polar residues) spans 178–189; that stretch reads VRSSASTENSVL. Disordered stretches follow at residues 178 to 200 and 212 to 274; these read VRSS…EGSE and EEEE…ASQI. Glycyl lysine isopeptide (Lys-Gly) (interchain with G-Cter in SUMO2) cross-links involve residues lysine 285, lysine 293, and lysine 368. Positions 293–356 are disordered; it reads KEKTKVLSGE…GGTGQAMHGP (64 aa). The segment at 397–419 adopts a C2H2-type 1 zinc-finger fold; that stretch reads FGCGICNKRFKLKHHLTEHMKTH. A C2H2-type 2; atypical zinc finger spans residues 424-446; sequence HACPHCGRRFRVQAFFLRHRDLC.

It localises to the nucleus. Functionally, may be involved in transcriptional regulation. The chain is Zinc finger and BTB domain-containing protein 9 (Zbtb9) from Mus musculus (Mouse).